The chain runs to 465 residues: Cysteine--tRNA ligase (465 aa).

Cys-27 contributes to the Zn(2+) binding site. The short motif at 29 to 39 is the 'HIGH' region element; that stretch reads PTVYDDAHLGH. Positions 207, 237, and 241 each coordinate Zn(2+). Residues 269–273 carry the 'KMSKS' region motif; it reads KMSKS. Residue Lys-272 participates in ATP binding.

The protein belongs to the class-I aminoacyl-tRNA synthetase family. As to quaternary structure, monomer. Zn(2+) serves as cofactor.

The protein resides in the cytoplasm. It carries out the reaction tRNA(Cys) + L-cysteine + ATP = L-cysteinyl-tRNA(Cys) + AMP + diphosphate. The chain is Cysteine--tRNA ligase from Helicobacter pylori (strain Shi470).